The chain runs to 58 residues: Potassium channel toxin alpha-KTx 16.6 (58 aa).

A signal peptide spans 1 to 22 (MKILSVLLIALIICSINICSEA). Cystine bridges form between Cys-29/Cys-50, Cys-35/Cys-55, and Cys-39/Cys-57.

The protein belongs to the short scorpion toxin superfamily. Potassium channel inhibitor family. Alpha-KTx 16 subfamily. As to expression, expressed by the venom gland.

It localises to the secreted. Its function is as follows. Inhibits potassium channel. This Buthus israelis (Israeli scorpion) protein is Potassium channel toxin alpha-KTx 16.6.